The primary structure comprises 94 residues: Pyrimidine/purine nucleoside phosphorylase (94 aa).

This sequence belongs to the nucleoside phosphorylase PpnP family.

The enzyme catalyses a purine D-ribonucleoside + phosphate = a purine nucleobase + alpha-D-ribose 1-phosphate. It catalyses the reaction adenosine + phosphate = alpha-D-ribose 1-phosphate + adenine. It carries out the reaction cytidine + phosphate = cytosine + alpha-D-ribose 1-phosphate. The catalysed reaction is guanosine + phosphate = alpha-D-ribose 1-phosphate + guanine. The enzyme catalyses inosine + phosphate = alpha-D-ribose 1-phosphate + hypoxanthine. It catalyses the reaction thymidine + phosphate = 2-deoxy-alpha-D-ribose 1-phosphate + thymine. It carries out the reaction uridine + phosphate = alpha-D-ribose 1-phosphate + uracil. The catalysed reaction is xanthosine + phosphate = alpha-D-ribose 1-phosphate + xanthine. Its function is as follows. Catalyzes the phosphorolysis of diverse nucleosides, yielding D-ribose 1-phosphate and the respective free bases. Can use uridine, adenosine, guanosine, cytidine, thymidine, inosine and xanthosine as substrates. Also catalyzes the reverse reactions. The chain is Pyrimidine/purine nucleoside phosphorylase from Aeromonas hydrophila subsp. hydrophila (strain ATCC 7966 / DSM 30187 / BCRC 13018 / CCUG 14551 / JCM 1027 / KCTC 2358 / NCIMB 9240 / NCTC 8049).